The chain runs to 210 residues: N-(5'-phosphoribosyl)anthranilate isomerase (210 aa).

The protein belongs to the TrpF family.

It catalyses the reaction N-(5-phospho-beta-D-ribosyl)anthranilate = 1-(2-carboxyphenylamino)-1-deoxy-D-ribulose 5-phosphate. The protein operates within amino-acid biosynthesis; L-tryptophan biosynthesis; L-tryptophan from chorismate: step 3/5. This is N-(5'-phosphoribosyl)anthranilate isomerase from Methanococcus aeolicus (strain ATCC BAA-1280 / DSM 17508 / OCM 812 / Nankai-3).